A 217-amino-acid polypeptide reads, in one-letter code: Probable lipoprotein CPn_0875/CP_0994/CPj0875/CpB0904 (217 aa).

An N-terminal signal peptide occupies residues 1-21 (MKRVIYKTIFCGLTLLTSLSS). A lipid anchor (N-palmitoyl cysteine) is attached at Cys22. A lipid anchor (S-diacylglycerol cysteine) is attached at Cys22.

The protein belongs to the chlamydial CPn_0875/CT_734/TC_0107 family.

Its subcellular location is the cell membrane. This Chlamydia pneumoniae (Chlamydophila pneumoniae) protein is Probable lipoprotein CPn_0875/CP_0994/CPj0875/CpB0904.